The sequence spans 363 residues: 5-hydroxytryptamine receptor 1E (363 aa).

Residues 1–21 lie on the Extracellular side of the membrane; that stretch reads MNITNCTTEASMAIRPKTITE. 2 N-linked (GlcNAc...) asparagine glycosylation sites follow: Asn2 and Asn5. A helical transmembrane segment spans residues 22 to 45; that stretch reads KMLICMTLVVITTLTTLLNLAVIM. The Cytoplasmic portion of the chain corresponds to 46 to 59; sequence AIGTTKKLHQPANY. A helical transmembrane segment spans residues 60-84; the sequence is LICSLAVTDLLVAVLVMPLSIIYIV. Topologically, residues 85–92 are extracellular; that stretch reads MDRWKLGY. The helical transmembrane segment at 93 to 118 threads the bilayer; sequence FLCEVWLSVDMTCCTCSILHLCVIAL. The cysteines at positions 95 and 173 are disulfide-linked. Residues Asp102 and Cys106 each coordinate serotonin. Residues 119-121 carry the DRY motif; important for ligand-induced conformation changes motif; sequence DRY. Residues 119–138 lie on the Cytoplasmic side of the membrane; the sequence is DRYWAITNAIEYARKRTAKR. Residues 139 to 157 form a helical membrane-spanning segment; it reads AALMILTVWTISIFISMPP. Residues 158 to 179 are Extracellular-facing; that stretch reads LFWRSHRRLSPPPSQCTIQHDH. The chain crosses the membrane as a helical span at residues 180–203; sequence VIYTIYSTLGAFYIPLTLILILYY. The Cytoplasmic segment spans residues 204 to 291; the sequence is RIYHAAKSLY…SSTRERKAAR (88 aa). The chain crosses the membrane as a helical span at residues 292–316; the sequence is ILGLILGAFILSWLPFFIKELIVGL. Residues 317–322 are Extracellular-facing; that stretch reads SIYTVS. Residues 323 to 345 form a helical membrane-spanning segment; sequence SEVADFLTWLGYVNSLINPLLYT. An NPxxY motif; important for ligand-induced conformation changes and signaling motif is present at residues 340 to 344; it reads NPLLY. The Cytoplasmic portion of the chain corresponds to 346–363; sequence SFNEDFKLAFKKLIRCRE.

Belongs to the G-protein coupled receptor 1 family.

The protein resides in the cell membrane. In terms of biological role, G-protein coupled receptor for 5-hydroxytryptamine (serotonin). Also functions as a receptor for various alkaloids and psychoactive substances. Ligand binding causes a conformation change that triggers signaling via guanine nucleotide-binding proteins (G proteins) and modulates the activity of downstream effectors, such as adenylate cyclase. HTR1E is coupled to G(i)/G(o) G alpha proteins and mediates inhibitory neurotransmission by inhibiting adenylate cyclase activity. The protein is 5-hydroxytryptamine receptor 1E (HTR1E) of Pan troglodytes (Chimpanzee).